The sequence spans 747 residues: Polyribonucleotide nucleotidyltransferase (747 aa).

Asp502 and Asp508 together coordinate Mg(2+). The 60-residue stretch at 569–628 (PRMLTITIDPDKIRDIIGPGGKIIKKIIEETGVEIDVEDDGRVFIASTDAAAGERALKII) folds into the KH domain. In terms of domain architecture, S1 motif spans 638–712 (GKVYNGKVTR…PQGRLKLSRK (75 aa)). The interval 718-747 (STVGEGGHRHFRRAGREGGHRGLNNRRQSR) is disordered.

It belongs to the polyribonucleotide nucleotidyltransferase family. Mg(2+) is required as a cofactor.

Its subcellular location is the cytoplasm. The catalysed reaction is RNA(n+1) + phosphate = RNA(n) + a ribonucleoside 5'-diphosphate. Functionally, involved in mRNA degradation. Catalyzes the phosphorolysis of single-stranded polyribonucleotides processively in the 3'- to 5'-direction. The protein is Polyribonucleotide nucleotidyltransferase of Moorella thermoacetica (strain ATCC 39073 / JCM 9320).